The following is a 172-amino-acid chain: NAD(P)H-quinone oxidoreductase subunit I, chloroplastic (172 aa).

4Fe-4S ferredoxin-type domains follow at residues Gly55–Lys84 and Leu95–Glu124. The [4Fe-4S] cluster site is built by Cys64, Cys67, Cys70, Cys74, Cys104, Cys107, Cys110, and Cys114.

Belongs to the complex I 23 kDa subunit family. NDH is composed of at least 16 different subunits, 5 of which are encoded in the nucleus. [4Fe-4S] cluster serves as cofactor.

The protein resides in the plastid. The protein localises to the chloroplast thylakoid membrane. The enzyme catalyses a plastoquinone + NADH + (n+1) H(+)(in) = a plastoquinol + NAD(+) + n H(+)(out). It carries out the reaction a plastoquinone + NADPH + (n+1) H(+)(in) = a plastoquinol + NADP(+) + n H(+)(out). Functionally, NDH shuttles electrons from NAD(P)H:plastoquinone, via FMN and iron-sulfur (Fe-S) centers, to quinones in the photosynthetic chain and possibly in a chloroplast respiratory chain. The immediate electron acceptor for the enzyme in this species is believed to be plastoquinone. Couples the redox reaction to proton translocation, and thus conserves the redox energy in a proton gradient. The protein is NAD(P)H-quinone oxidoreductase subunit I, chloroplastic of Olimarabidopsis pumila (Dwarf rocket).